The primary structure comprises 789 residues: DNA topoisomerase 4 subunit A (789 aa).

The Topo IIA-type catalytic domain occupies 34 to 499; that stretch reads LPDLRDGLKP…EKQKVQDSDF (466 aa). Residue Y122 is the O-(5'-phospho-DNA)-tyrosine intermediate of the active site.

The protein belongs to the type II topoisomerase GyrA/ParC subunit family. ParC type 2 subfamily. In terms of assembly, heterotetramer composed of ParC and ParE.

The protein resides in the cell membrane. It catalyses the reaction ATP-dependent breakage, passage and rejoining of double-stranded DNA.. Topoisomerase IV is essential for chromosome segregation. It relaxes supercoiled DNA. Performs the decatenation events required during the replication of a circular DNA molecule. The chain is DNA topoisomerase 4 subunit A from Mycoplasma pneumoniae (strain ATCC 29342 / M129 / Subtype 1) (Mycoplasmoides pneumoniae).